The sequence spans 500 residues: Protein nucleotidyltransferase YdiU (500 aa).

The ATP site is built by Gly-96, Gly-98, Arg-99, Lys-119, Asp-131, Gly-132, Arg-182, and Arg-189. Asp-258 functions as the Proton acceptor in the catalytic mechanism. Residues Asn-259 and Asp-268 each coordinate Mg(2+). Asp-268 is a binding site for ATP.

The protein belongs to the SELO family. Mg(2+) serves as cofactor. Requires Mn(2+) as cofactor.

It carries out the reaction L-seryl-[protein] + ATP = 3-O-(5'-adenylyl)-L-seryl-[protein] + diphosphate. It catalyses the reaction L-threonyl-[protein] + ATP = 3-O-(5'-adenylyl)-L-threonyl-[protein] + diphosphate. The enzyme catalyses L-tyrosyl-[protein] + ATP = O-(5'-adenylyl)-L-tyrosyl-[protein] + diphosphate. The catalysed reaction is L-histidyl-[protein] + UTP = N(tele)-(5'-uridylyl)-L-histidyl-[protein] + diphosphate. It carries out the reaction L-seryl-[protein] + UTP = O-(5'-uridylyl)-L-seryl-[protein] + diphosphate. It catalyses the reaction L-tyrosyl-[protein] + UTP = O-(5'-uridylyl)-L-tyrosyl-[protein] + diphosphate. In terms of biological role, nucleotidyltransferase involved in the post-translational modification of proteins. It can catalyze the addition of adenosine monophosphate (AMP) or uridine monophosphate (UMP) to a protein, resulting in modifications known as AMPylation and UMPylation. The polypeptide is Protein nucleotidyltransferase YdiU (Rhizobium etli (strain ATCC 51251 / DSM 11541 / JCM 21823 / NBRC 15573 / CFN 42)).